The sequence spans 582 residues: Arginine--tRNA ligase (582 aa).

Residues 127–137 (PNLAKEMHVGH) carry the 'HIGH' region motif.

The protein belongs to the class-I aminoacyl-tRNA synthetase family. As to quaternary structure, monomer.

Its subcellular location is the cytoplasm. It carries out the reaction tRNA(Arg) + L-arginine + ATP = L-arginyl-tRNA(Arg) + AMP + diphosphate. The sequence is that of Arginine--tRNA ligase from Psychromonas ingrahamii (strain DSM 17664 / CCUG 51855 / 37).